A 279-amino-acid chain; its full sequence is Oxygen-dependent coproporphyrinogen-III oxidase (279 aa).

A substrate-binding site is contributed by serine 102. Histidine 106 and histidine 116 together coordinate a divalent metal cation. The Proton donor role is filled by histidine 116. 118–120 (NTR) provides a ligand contact to substrate. Residues histidine 149 and histidine 179 each contribute to the a divalent metal cation site. Positions 244–279 (YVEFNLLYDRGTKFGLMTDGNVEAILMSLPPEVKFN) are important for dimerization.

Belongs to the aerobic coproporphyrinogen-III oxidase family. As to quaternary structure, homodimer. The cofactor is a divalent metal cation.

It localises to the cytoplasm. The catalysed reaction is coproporphyrinogen III + O2 + 2 H(+) = protoporphyrinogen IX + 2 CO2 + 2 H2O. Its pathway is porphyrin-containing compound metabolism; protoporphyrin-IX biosynthesis; protoporphyrinogen-IX from coproporphyrinogen-III (O2 route): step 1/1. In terms of biological role, involved in the heme biosynthesis. Catalyzes the aerobic oxidative decarboxylation of propionate groups of rings A and B of coproporphyrinogen-III to yield the vinyl groups in protoporphyrinogen-IX. This Rickettsia conorii (strain ATCC VR-613 / Malish 7) protein is Oxygen-dependent coproporphyrinogen-III oxidase.